Consider the following 1482-residue polypeptide: Type VII secretion system protein EssC (1482 aa).

Residues 1–229 (MHKLIIKYNK…RPPQPIQKNN (229 aa)) are Cytoplasmic-facing. Residues 230–252 (TVIWRSIIPPLVMIALTVVIFLV) traverse the membrane as a helical segment. Over 253-256 (RPIG) the chain is Extracellular. A helical membrane pass occupies residues 257-279 (IYILMMIGMSTVTIVFGITTYFS). Over 280–1482 (EKKKYNKDVE…EYQKIKLMEG (1203 aa)) the chain is Cytoplasmic. FtsK domains are found at residues 652–846 (DDIL…QDSN) and 997–1183 (QGPM…NELT). Residues 672-679 (GTTGSGKS) and 1014-1021 (GSPGYGRT) each bind ATP.

It belongs to the EssC family. Homooligomer. Interacts with EsaE.

The protein localises to the cell membrane. Component of the type VII secretion system (Ess). Required for the secretion of substrates including EsxA and EsxB. However, unable to support secretion of the substrate protein EsxC. The chain is Type VII secretion system protein EssC from Staphylococcus aureus (strain MRSA252).